We begin with the raw amino-acid sequence, 662 residues long: DNA ligase (662 aa).

NAD(+) contacts are provided by residues 34–38 (DYDYD), 83–84 (SI), and E113. The N6-AMP-lysine intermediate role is filled by K115. Residues R136, E172, K286, and K310 each contribute to the NAD(+) site. The Zn(2+) site is built by C404, C407, C422, and C427. In terms of domain architecture, BRCT spans 583–662 (RESSSCLGKT…NDLLKILYPN (80 aa)).

The protein belongs to the NAD-dependent DNA ligase family. LigA subfamily. Requires Mg(2+) as cofactor. Mn(2+) is required as a cofactor.

The enzyme catalyses NAD(+) + (deoxyribonucleotide)n-3'-hydroxyl + 5'-phospho-(deoxyribonucleotide)m = (deoxyribonucleotide)n+m + AMP + beta-nicotinamide D-nucleotide.. In terms of biological role, DNA ligase that catalyzes the formation of phosphodiester linkages between 5'-phosphoryl and 3'-hydroxyl groups in double-stranded DNA using NAD as a coenzyme and as the energy source for the reaction. It is essential for DNA replication and repair of damaged DNA. The sequence is that of DNA ligase from Chlamydia caviae (strain ATCC VR-813 / DSM 19441 / 03DC25 / GPIC) (Chlamydophila caviae).